We begin with the raw amino-acid sequence, 276 residues long: Undecaprenyl-diphosphatase 1 (276 aa).

Helical transmembrane passes span 44–63 (ALAF…IWEY), 85–105 (VNLL…ADLI), 109–129 (LFNP…MLWA), 183–203 (AATE…AVYS), 214–234 (GDFA…MLAV), and 249–269 (FAWY…LGMI).

This sequence belongs to the UppP family.

It is found in the cell inner membrane. It catalyses the reaction di-trans,octa-cis-undecaprenyl diphosphate + H2O = di-trans,octa-cis-undecaprenyl phosphate + phosphate + H(+). Catalyzes the dephosphorylation of undecaprenyl diphosphate (UPP). Confers resistance to bacitracin. This Stutzerimonas stutzeri (strain A1501) (Pseudomonas stutzeri) protein is Undecaprenyl-diphosphatase 1.